A 153-amino-acid chain; its full sequence is Ergochrome gene cluster protein CPUR_05425 (153 aa).

The protein operates within pigment biosynthesis. In terms of biological role, part of the ergochrome gene cluster responsible for the typical purple-black color of the ergot sclerotia. The ergochrome gene cluster produces several ergot pigments including the yellow ergochrome secalonic acid and its derivatives, as well as the red anthraquinones endocrocin and clavorubin. The pathway begins with the synthesis of atrochrysone thioester by the polyketide synthase (PKS) CPUR_05437. The atrochrysone carboxyl ACP thioesterase CPUR_05436 then breaks the thioester bond and releases the atrochrysone carboxylic acid from CPUR_05437. The atrochrysone carboxylic acid is then converted to atrochrysone which is further transformed into emodin anthrone. The next step is performed by the anthrone oxygenase CPUR_05434 that catalyzes the oxidation of emodinanthrone to emodin. Emodin is further modified to yield monodictyphenone via several steps involving CPUR_05427, CPUR_05428, CPUR_05429 and CPUR_05430. The short chain dehydrogenase/reductase CPUR_05418 then catalyzes the C-5 ketoreduction to give the xanthone skeleton of the monomeric units. Ergochromes formation requires further dimerization steps of different xanthone units, probably catalyzed by the cytochrome P450 monooxygenase CPUR_05419. CPUR_05425, CPUR_05426 and CPUR_05431 are unique to Claviceps, thus it is likely that they are involved in further modification of xanthone units or in their dimerization. The yellow ergochromes and the red anthraquinone pigments endocrocin and clavorubin are products from the same PKS derived precursors and the latter are likely shunt products in the pathway of xanthone biosynthesis. It is proposed that atrochrysone carboxylic acid released from the PKS CPUR_05437 can also be converted to endocrocin anthrone which is further oxidized into endocrocin by CPUR_05435. Endocrocin could be then modified to clavorubin, possibly by CPUR_05423 and CPUR_05431. Clavorubin is the principal anthraquinone metabolite produced by the cluster with a much higher yield compared to endocrocin. The protein is Ergochrome gene cluster protein CPUR_05425 of Claviceps purpurea (strain 20.1) (Ergot fungus).